We begin with the raw amino-acid sequence, 442 residues long: Protein UNUSUAL FLORAL ORGANS (442 aa).

The interval 1 to 85 (MDSTVFINNP…RFYSLLFSNT (85 aa)) is interaction with SKP1A. The F-box domain occupies 44–90 (GRIWSKLPPPLLDRVIAFLPPPAFFRTRCVCKRFYSLLFSNTFLETY).

As to quaternary structure, part of a putative SCF (ASK/Cullin/F-box) ubiquitin ligase complex. Interacts with SKP1A/ASK1, SKP1B/ASK2 and ASK11.

The protein resides in the nucleus. It functions in the pathway protein modification; protein ubiquitination. Component of SCF(ASK-cullin-F-box) E3 ubiquitin ligase complexes, which may mediate the ubiquitination and subsequent proteasomal degradation of target proteins. Considered as a meristem identity factor required for normal growth of the young floral meristem. Acts together with LEAFY to positively regulate the B class floral homeotic genes APETALA3 and PISTILLATA. In this way, operates as a region-specific regulator for petal and stamen development. Alternatively, may play a role as a negative regulator of the C class floral homeotic genes. Interacts together with the SKP1-like protein ASK1 to form a ubiquitin E3 ligase complex and could indirectly promote the ubiquitination and degradation of specific proteins controlling the floral primordia development like repressors of B class floral homeotic genes. This Arabidopsis thaliana (Mouse-ear cress) protein is Protein UNUSUAL FLORAL ORGANS (UFO).